Reading from the N-terminus, the 251-residue chain is MPANYDFTDKRILVTGASQGIGKEICLSLAKAGAQVIAFARNEANLLSLVKETTSLRYTIIPIVGDVSANEEVLFKLIVPHFPIHGLVNNAGIATNHAIGQITQQSIDRTFAVNVRGPILIAQLVARNFVDRQIKGSIVNISSQAAIRPLDNHTVYCASKAALDMVTRCLANELGSQNIRVNSVNPTVVMTDMGRDNWSDPDKKKKMLDRMPIKRFAEVDEVVNAVLFLLSDNASMTTGSTLPVDGGFSNN.

13-42 (LVTGASQGIGKEICLSLAKAGAQVIAFARN) lines the NADP(+) pocket. Residue Ser143 coordinates substrate. Tyr156 acts as the Proton acceptor in catalysis. Residue Lys160 participates in NADP(+) binding.

Belongs to the short-chain dehydrogenases/reductases (SDR) family. Homotetramer. As to expression, expressed in intestine, gonad and spermatids (at protein level). Expressed in intestine, uterine seam, gonadal sheath cells, spermathecal-uterus valve and spermatids.

Its subcellular location is the cell membrane. It catalyses the reaction xylitol + NADP(+) = L-xylulose + NADPH + H(+). With respect to regulation, strongly inhibited by 10% dimethyl sulfoxide. In terms of biological role, catalyzes the NADPH-dependent reduction of L-xylulose, D-xylulose, L-(+) erythrulose, D-erythrose, D-threose, L-ribulose, 1,4-dibromo-2,3-butanedione and 2,3-heptanedione. Also active against isatin, 9,10-phenanthrenequinone, menadione, 2,3-hexaenadione and 3,4-hexahenadione. No activity observed when tested using NADH rather than NADPH. This Caenorhabditis elegans protein is L-xylulose reductase.